The primary structure comprises 35 residues: uncharacterized protein (35 aa).

A helical membrane pass occupies residues 10–30 (LMITASFFAIFIIIVVSVLLL).

The protein localises to the membrane. This is an uncharacterized protein from Salmonella paratyphi A (strain ATCC 9150 / SARB42).